The chain runs to 148 residues: 3-dehydroquinate dehydratase (148 aa).

Substrate contacts are provided by Asn74, His80, and Asp87. The active-site Proton donor is His100. Residues 101 to 102 (LS) and Arg111 each bind substrate.

The protein belongs to the type-II 3-dehydroquinase family. In terms of assembly, homododecamer.

The catalysed reaction is 3-dehydroquinate = 3-dehydroshikimate + H2O. It participates in metabolic intermediate biosynthesis; chorismate biosynthesis; chorismate from D-erythrose 4-phosphate and phosphoenolpyruvate: step 3/7. This Bacillus subtilis (strain 168) protein is 3-dehydroquinate dehydratase (yqhS).